The chain runs to 367 residues: Palmitoyltransferase ZDHHC2 (367 aa).

The Cytoplasmic segment spans residues 1–16; sequence MAPSGPGSSARRRCRR. A helical transmembrane segment spans residues 17 to 37; sequence VLYWIPVVFITLLLGWSYYAY. Topologically, residues 38-54 are lumenal; that stretch reads AIQLCIVSMENTGEQVV. A helical membrane pass occupies residues 55–75; it reads CLMAYHLLFAMFVWSYWKTIF. The Cytoplasmic portion of the chain corresponds to 76-170; it reads TLPMNPSKEF…NNCVGFSNYK (95 aa). Residues 127-177 form the DHHC domain; it reads RYCDRCQLIKPDRCHHCSVCDKCILKMDHHCPWVNNCVGFSNYKFFLLFLA. Residue Cys-157 is the S-palmitoyl cysteine intermediate of the active site. Residues 171–191 form a helical membrane-spanning segment; that stretch reads FFLLFLAYSLLYCLFIAATDL. The Lumenal segment spans residues 192–208; sequence QYFIKFWTNGLPDTQAK. Residues 209–229 form a helical membrane-spanning segment; sequence FHIMFLFFAAAMFSVSLSSLF. The Cytoplasmic portion of the chain corresponds to 230–367; the sequence is GYHCWLVSKN…NPALTMENET (138 aa). Residues 299 to 367 are mediates localization to plasma membrane and recycling endosomes; sequence NQDPEQASTP…NPALTMENET (69 aa). Positions 330–367 are disordered; that stretch reads ESQSHLLTDSQSWTESSINPGKCKAGMSNPALTMENET. A compositionally biased stretch (polar residues) spans 333-348; the sequence is SHLLTDSQSWTESSIN. Residues 335–336 carry the Non-canonical dileucine endocytic signal motif; it reads LL. Ser-341 carries the post-translational modification Phosphoserine. An NPxY-like endocytic signal motif is present at residues 358-361; the sequence is NPAL.

This sequence belongs to the DHHC palmitoyltransferase family. In terms of assembly, monomer. Homodimer. The monomeric form has a higher catalytic activity. In terms of processing, autopalmitoylated. Ubiquitously expressed. Reduced expression in colorectal cancers with liver metastasis.

It is found in the postsynaptic density. Its subcellular location is the postsynaptic recycling endosome membrane. The protein localises to the cell membrane. It localises to the endoplasmic reticulum membrane. The protein resides in the golgi apparatus membrane. The enzyme catalyses L-cysteinyl-[protein] + hexadecanoyl-CoA = S-hexadecanoyl-L-cysteinyl-[protein] + CoA. It carries out the reaction L-cysteinyl-[protein] + tetradecanoyl-CoA = S-tetradecanoyl-L-cysteinyl-[protein] + CoA. The catalysed reaction is L-cysteinyl-[protein] + octadecanoyl-CoA = S-octadecanoyl-L-cysteinyl-[protein] + CoA. Functionally, palmitoyltransferase that catalyzes the addition of palmitate onto various protein substrates and is involved in a variety of cellular processes. Has no stringent fatty acid selectivity and in addition to palmitate can also transfer onto target proteins myristate from tetradecanoyl-CoA and stearate from octadecanoyl-CoA. In the nervous system, plays a role in long term synaptic potentiation by palmitoylating AKAP5 through which it regulates protein trafficking from the dendritic recycling endosomes to the plasma membrane and controls both structural and functional plasticity at excitatory synapses. In dendrites, mediates the palmitoylation of DLG4 when synaptic activity decreases and induces synaptic clustering of DLG4 and associated AMPA-type glutamate receptors. Also mediates the de novo and turnover palmitoylation of RGS7BP, a shuttle for Gi/o-specific GTPase-activating proteins/GAPs, promoting its localization to the plasma membrane in response to the activation of G protein-coupled receptors. Through the localization of these GTPase-activating proteins/GAPs, it also probably plays a role in G protein-coupled receptors signaling in neurons. Also probably plays a role in cell adhesion by palmitoylating CD9 and CD151 to regulate their expression and function. Palmitoylates the endoplasmic reticulum protein CKAP4 and regulates its localization to the plasma membrane. Could also palmitoylate LCK and regulate its localization to the plasma membrane. Its function is as follows. (Microbial infection) Promotes Chikungunya virus (CHIKV) replication by mediating viral nsp1 palmitoylation. The protein is Palmitoyltransferase ZDHHC2 of Homo sapiens (Human).